Consider the following 791-residue polypeptide: Phenylalanine--tRNA ligase beta subunit (791 aa).

A tRNA-binding domain is found at 39–149 (GDEIQNVVTG…SDTAIGKDIK (111 aa)). The 76-residue stretch at 403-478 (IKERNLKVDS…RIYGYNNIPT (76 aa)) folds into the B5 domain. Positions 456, 462, 465, and 466 each coordinate Mg(2+). The FDX-ACB domain maps to 698-791 (PKFPAVDRDM…LENNLGAELR (94 aa)).

Belongs to the phenylalanyl-tRNA synthetase beta subunit family. Type 1 subfamily. As to quaternary structure, tetramer of two alpha and two beta subunits. Requires Mg(2+) as cofactor.

The protein resides in the cytoplasm. The catalysed reaction is tRNA(Phe) + L-phenylalanine + ATP = L-phenylalanyl-tRNA(Phe) + AMP + diphosphate + H(+). This is Phenylalanine--tRNA ligase beta subunit from Clostridium tetani (strain Massachusetts / E88).